Consider the following 220-residue polypeptide: MASERLPNRPACLLVASGAAEGVSAQSFLHCFTMASTAFNLQVATPGGKAMEFVDVTESNARWVQDFRLKAYASPAKLESIDGARYHALLIPSCPGALTDLASSGSLARILQHFHSESKPICAVGHGVAALCCATNEDRSWVFDSYSLTGPSVCELVRAPGFARLPLVVEDFVKDSGACFSASEPDAVHVVLDRHLVTGQNASSTVPAVQNLLFLCGSRK.

An N-terminal signal peptide occupies residues 1–38 (MASERLPNRPACLLVASGAAEGVSAQSFLHCFTMASTA). Residue N201 is glycosylated (N-linked (GlcNAc...) asparagine).

The protein belongs to the peptidase C56 family. Homotetramer. Component of the FERRY complex composed of five subunits, TBCK, PPP1R21, FERRY3, CRYZL1 and GATD1 with a ratio of 1:2:1:2:4, respectively.

It is found in the secreted. Its subcellular location is the early endosome. In terms of biological role, component of the FERRY complex (Five-subunit Endosomal Rab5 and RNA/ribosome intermediary). The FERRY complex directly interacts with mRNAs and RAB5A, and functions as a RAB5A effector involved in the localization and the distribution of specific mRNAs most likely by mediating their endosomal transport. The complex recruits mRNAs and ribosomes to early endosomes through direct mRNA-interaction. The polypeptide is Glutamine amidotransferase-like class 1 domain-containing protein 1 (Homo sapiens (Human)).